The following is an 827-amino-acid chain: Glycerol-3-phosphate acyltransferase (827 aa).

Residues 325-330 carry the HXXXXD motif motif; it reads CHRSHM.

Belongs to the GPAT/DAPAT family.

It is found in the cell inner membrane. It catalyses the reaction sn-glycerol 3-phosphate + an acyl-CoA = a 1-acyl-sn-glycero-3-phosphate + CoA. Its pathway is phospholipid metabolism; CDP-diacylglycerol biosynthesis; CDP-diacylglycerol from sn-glycerol 3-phosphate: step 1/3. This Shigella flexneri serotype 5b (strain 8401) protein is Glycerol-3-phosphate acyltransferase.